Reading from the N-terminus, the 84-residue chain is MVEKQVEVKLKTGLQARPAALFVQEANRFTSEIFIEKDGKKVNAKSIMGLMSLAIGSGSTITLITEGNDEQEAMEALIAFIEKE.

One can recognise an HPr domain in the interval 1 to 84; the sequence is MVEKQVEVKL…EALIAFIEKE (84 aa). Phosphoserine; by HPrK/P is present on Ser-46.

Belongs to the HPr family.

Its function is as follows. Involved in carbon catabolite repression (CCR). This Halalkalibacterium halodurans (strain ATCC BAA-125 / DSM 18197 / FERM 7344 / JCM 9153 / C-125) (Bacillus halodurans) protein is HPr-like protein Crh (crh).